A 392-amino-acid polypeptide reads, in one-letter code: Formate-dependent phosphoribosylglycinamide formyltransferase (392 aa).

Residues 22 to 23 (EL) and E82 each bind N(1)-(5-phospho-beta-D-ribosyl)glycinamide. ATP-binding positions include R114, K155, 160 to 165 (SSGKGQ), 195 to 198 (EGVV), and E203. The 190-residue stretch at 119–308 (RLAAEELGLP…EFALHVRAFL (190 aa)) folds into the ATP-grasp domain. Mg(2+) is bound by residues E267 and E279. N(1)-(5-phospho-beta-D-ribosyl)glycinamide contacts are provided by residues D286, K355, and 362–363 (RR).

It belongs to the PurK/PurT family. As to quaternary structure, homodimer.

The enzyme catalyses N(1)-(5-phospho-beta-D-ribosyl)glycinamide + formate + ATP = N(2)-formyl-N(1)-(5-phospho-beta-D-ribosyl)glycinamide + ADP + phosphate + H(+). It participates in purine metabolism; IMP biosynthesis via de novo pathway; N(2)-formyl-N(1)-(5-phospho-D-ribosyl)glycinamide from N(1)-(5-phospho-D-ribosyl)glycinamide (formate route): step 1/1. Functionally, involved in the de novo purine biosynthesis. Catalyzes the transfer of formate to 5-phospho-ribosyl-glycinamide (GAR), producing 5-phospho-ribosyl-N-formylglycinamide (FGAR). Formate is provided by PurU via hydrolysis of 10-formyl-tetrahydrofolate. In Salmonella paratyphi A (strain ATCC 9150 / SARB42), this protein is Formate-dependent phosphoribosylglycinamide formyltransferase.